The primary structure comprises 396 residues: L-lactate dehydrogenase (396 aa).

Positions 1–380 (MIISAASDYR…TQDSLVQVLG (380 aa)) constitute an FMN hydroxy acid dehydrogenase domain. Tyrosine 24 serves as a coordination point for substrate. Serine 106 and glutamine 127 together coordinate FMN. Tyrosine 129 contributes to the substrate binding site. Threonine 155 lines the FMN pocket. Residue arginine 164 participates in substrate binding. Residue lysine 251 coordinates FMN. The Proton acceptor role is filled by histidine 275. Arginine 278 serves as a coordination point for substrate. 306–330 (DSGIRNGLDVVRMIALGADTVLLGR) contacts FMN.

This sequence belongs to the FMN-dependent alpha-hydroxy acid dehydrogenase family. Requires FMN as cofactor.

It localises to the cell inner membrane. The catalysed reaction is (S)-lactate + A = pyruvate + AH2. Functionally, catalyzes the conversion of L-lactate to pyruvate. Is coupled to the respiratory chain. The sequence is that of L-lactate dehydrogenase from Escherichia coli O1:K1 / APEC.